Reading from the N-terminus, the 111-residue chain is Rhodanese domain-containing protein CG4456 (111 aa).

The Rhodanese domain occupies 12 to 110; that stretch reads NHPDVYLIDV…SWNEWAQKEG (99 aa).

The protein is Rhodanese domain-containing protein CG4456 of Drosophila melanogaster (Fruit fly).